The chain runs to 99 residues: Class II hydrophobin 3 (99 aa).

The N-terminal stretch at 1-18 (MRIDILATAALLAQLASA) is a signal peptide. 3 cysteine pairs are disulfide-bonded: C31/C79, C40/C70, and C41/C53.

This sequence belongs to the cerato-ulmin hydrophobin family. In terms of assembly, homodimer. Homodimers further self-assemble to form highly ordered films at water-air interfaces through intermolecular interactions.

It localises to the secreted. The protein resides in the cell wall. Functionally, aerial growth, conidiation, and dispersal of filamentous fungi in the environment rely upon a capability of their secreting small amphipathic proteins called hydrophobins (HPBs) with low sequence identity. Class I can self-assemble into an outermost layer of rodlet bundles on aerial cell surfaces, conferring cellular hydrophobicity that supports fungal growth, development and dispersal; whereas Class II form highly ordered films at water-air interfaces through intermolecular interactions but contribute nothing to the rodlet structure. Hyd3 is a class II hydrophobin required for barley root colonization. Hyd1 and Hyd3 are jointly required for conidial hydrophobicity and dispersal, but seem not to be involved in mycelia hydrophobicity. Inhibits conidial germination in environments not suitable for mycelial growth. Plays probably a role in intraspecific signaling or hyphal fusion. The chain is Class II hydrophobin 3 from Bionectria ochroleuca (Gliocladium roseum).